The primary structure comprises 209 residues: Ribosomal RNA large subunit methyltransferase E (209 aa).

Gly-60, Trp-62, Asp-80, Asp-96, and Asp-121 together coordinate S-adenosyl-L-methionine. Lys-161 acts as the Proton acceptor in catalysis. Residues 182–196 show a composition bias toward basic and acidic residues; the sequence is VQMRKPSSSRDRSRE. The segment at 182–209 is disordered; sequence VQMRKPSSSRDRSREQYLLGRGFRGRSE.

Belongs to the class I-like SAM-binding methyltransferase superfamily. RNA methyltransferase RlmE family.

Its subcellular location is the cytoplasm. It carries out the reaction uridine(2552) in 23S rRNA + S-adenosyl-L-methionine = 2'-O-methyluridine(2552) in 23S rRNA + S-adenosyl-L-homocysteine + H(+). Specifically methylates the uridine in position 2552 of 23S rRNA at the 2'-O position of the ribose in the fully assembled 50S ribosomal subunit. The protein is Ribosomal RNA large subunit methyltransferase E of Pseudomonas fluorescens (strain ATCC BAA-477 / NRRL B-23932 / Pf-5).